Reading from the N-terminus, the 189-residue chain is Probable nicotinate-nucleotide adenylyltransferase (189 aa).

Belongs to the NadD family.

It catalyses the reaction nicotinate beta-D-ribonucleotide + ATP + H(+) = deamido-NAD(+) + diphosphate. The protein operates within cofactor biosynthesis; NAD(+) biosynthesis; deamido-NAD(+) from nicotinate D-ribonucleotide: step 1/1. Functionally, catalyzes the reversible adenylation of nicotinate mononucleotide (NaMN) to nicotinic acid adenine dinucleotide (NaAD). The sequence is that of Probable nicotinate-nucleotide adenylyltransferase from Exiguobacterium sibiricum (strain DSM 17290 / CCUG 55495 / CIP 109462 / JCM 13490 / 255-15).